Reading from the N-terminus, the 77-residue chain is Acyl carrier protein (77 aa).

Residues 2 to 77 (SSIEKRVKEI…DAIDYITEHT (76 aa)) form the Carrier domain. Ser37 bears the O-(pantetheine 4'-phosphoryl)serine mark.

The protein belongs to the acyl carrier protein (ACP) family. Post-translationally, 4'-phosphopantetheine is transferred from CoA to a specific serine of apo-ACP by AcpS. This modification is essential for activity because fatty acids are bound in thioester linkage to the sulfhydryl of the prosthetic group.

Its subcellular location is the cytoplasm. The protein operates within lipid metabolism; fatty acid biosynthesis. Carrier of the growing fatty acid chain in fatty acid biosynthesis. This is Acyl carrier protein from Geobacter sulfurreducens (strain ATCC 51573 / DSM 12127 / PCA).